We begin with the raw amino-acid sequence, 312 residues long: tRNA uridine(34) hydroxylase (312 aa).

Residues 123 to 217 (SDPEVLLIDT…YLEEVPQEQS (95 aa)) enclose the Rhodanese domain. Catalysis depends on Cys177, which acts as the Cysteine persulfide intermediate. Basic and acidic residues predominate over residues 282–293 (ARERQKQIELAR). Residues 282 to 312 (ARERQKQIELARQRNQPHPLGRDPRQSTLEN) are disordered.

The protein belongs to the TrhO family.

It carries out the reaction uridine(34) in tRNA + AH2 + O2 = 5-hydroxyuridine(34) in tRNA + A + H2O. Functionally, catalyzes oxygen-dependent 5-hydroxyuridine (ho5U) modification at position 34 in tRNAs. This chain is tRNA uridine(34) hydroxylase, found in Pseudomonas paraeruginosa (strain DSM 24068 / PA7) (Pseudomonas aeruginosa (strain PA7)).